Reading from the N-terminus, the 536-residue chain is Beta-hexosaminidase subunit beta (536 aa).

Positions 1 to 31 (MPQSPRSAPGLLLLQALVSLVSLALVAPARL) are cleaved as a signal peptide. N-linked (GlcNAc...) asparagine glycosylation is present at asparagine 63. A disulfide bridge links cysteine 70 with cysteine 116. 2 N-linked (GlcNAc...) asparagine glycosylation sites follow: asparagine 169 and asparagine 306. 2 cysteine pairs are disulfide-bonded: cysteine 288-cysteine 339 and cysteine 513-cysteine 530. Catalysis depends on glutamate 334, which acts as the Proton donor.

Belongs to the glycosyl hydrolase 20 family. There are 3 forms of beta-hexosaminidase: hexosaminidase A is a heterodimer composed of one subunit alpha and one subunit beta (chain A and B); hexosaminidase B is a homodimer of two beta subunits (two chains A and B); hexosaminidase S is a homodimer of two alpha subunits. The composition of the dimer (isozyme A versus isozyme S) has a significant effect on the substrate specificity of the alpha subunit active site.

It is found in the lysosome. It localises to the cytoplasmic vesicle. The protein resides in the secretory vesicle. The protein localises to the cortical granule. The enzyme catalyses Hydrolysis of terminal non-reducing N-acetyl-D-hexosamine residues in N-acetyl-beta-D-hexosaminides.. It catalyses the reaction N-acetyl-beta-D-galactosaminyl-(1-&gt;4)-beta-D-3-sulfogalactosyl-(1-&gt;4)-beta-D-glucosyl-(1&lt;-&gt;1')-ceramide + H2O = a beta-D-3-sulfogalactosyl-(1-&gt;4)-beta-D-glucosyl-(1&lt;-&gt;1')-ceramide + N-acetyl-beta-D-galactosamine. It carries out the reaction a ganglioside GM2 (d18:1(4E)) + H2O = a ganglioside GM3 (d18:1(4E)) + N-acetyl-beta-D-galactosamine. The catalysed reaction is a ganglioside GM2 + H2O = a ganglioside GM3 + N-acetyl-beta-D-galactosamine. The enzyme catalyses beta-D-GalNAc-(1-&gt;4)-alpha-L-IdoA-(1-&gt;3)-beta-D-GalNAc-4-sulfate-(1-&gt;4)-alpha-L-IdoA-(1-&gt;3)-D-GalNAc-4-sulfate + H2O = alpha-L-IdoA-(1-&gt;3)-beta-D-GalNAc-4-sulfate-(1-&gt;4)-alpha-L-IdoA-(1-&gt;3)-D-GalNAc-4-sulfate + N-acetyl-D-galactosamine. It catalyses the reaction N-acetyl-beta-D-6-sulfogalactosaminyl-(1-&gt;4)-alpha-L-iduronyl-(1-&gt;3)-N-acetyl-D-6-sulfogalactosamine + H2O = alpha-L-iduronyl-(1-&gt;3)-N-acetyl-D-6-sulfogalactosamine + N-acetyl-D-6-sulfogalactosamine. Its activity is regulated as follows. Addition of GM2A stimulates the hydrolysis of sulfated glycosphingolipid SM2 and the ganglioside GM2. Its function is as follows. Hydrolyzes the non-reducing end N-acetyl-D-hexosamine and/or sulfated N-acetyl-D-hexosamine of glycoconjugates, such as the oligosaccharide moieties from proteins and neutral glycolipids, or from certain mucopolysaccharides. The isozyme B does not hydrolyze each of these substrates, however hydrolyzes efficiently neutral oligosaccharide. Only the isozyme A is responsible for the degradation of GM2 gangliosides in the presence of GM2A. During fertilization is responsible, at least in part, for the zona block to polyspermy. Present in the cortical granules of non-activated oocytes, is exocytosed during the cortical reaction in response to oocyte activation and inactivates the sperm galactosyltransferase-binding site, accounting for the block in sperm binding to the zona pellucida. This is Beta-hexosaminidase subunit beta from Mus musculus (Mouse).